A 676-amino-acid chain; its full sequence is Ribonuclease R (676 aa).

Residues 207–527 (RKDLRDLLCF…LIVHRLLFNP (321 aa)) enclose the RNB domain. One can recognise an S1 motif domain in the interval 566 to 651 (NKFLQEQPKT…LTQKIVWSIA (86 aa)). The interval 656–676 (DKPKKIKKTPSKKKGTKKRAS) is disordered. Positions 659–676 (KKIKKTPSKKKGTKKRAS) are enriched in basic residues.

This sequence belongs to the RNR ribonuclease family. RNase R subfamily.

The protein resides in the cytoplasm. The enzyme catalyses Exonucleolytic cleavage in the 3'- to 5'-direction to yield nucleoside 5'-phosphates.. Its function is as follows. 3'-5' exoribonuclease that releases 5'-nucleoside monophosphates and is involved in maturation of structured RNAs. The polypeptide is Ribonuclease R (Chlamydia pneumoniae (Chlamydophila pneumoniae)).